We begin with the raw amino-acid sequence, 106 residues long: MAARIKKGDQVLVLSGKSRGVRGEVLAVMPKAEKAVVRGVAVAKRHTKPNRMGGEGGIIEREMPIHLSNLKLVDPKSGKPTRVGFRILEDGRKVRVAKATGEVIEG.

Belongs to the universal ribosomal protein uL24 family. As to quaternary structure, part of the 50S ribosomal subunit.

Its function is as follows. One of two assembly initiator proteins, it binds directly to the 5'-end of the 23S rRNA, where it nucleates assembly of the 50S subunit. Functionally, one of the proteins that surrounds the polypeptide exit tunnel on the outside of the subunit. In Gluconobacter oxydans (strain 621H) (Gluconobacter suboxydans), this protein is Large ribosomal subunit protein uL24.